Reading from the N-terminus, the 140-residue chain is Holo-[acyl-carrier-protein] synthase (140 aa).

Mg(2+)-binding residues include Asp8 and Glu62.

This sequence belongs to the P-Pant transferase superfamily. AcpS family. Requires Mg(2+) as cofactor.

It is found in the cytoplasm. It carries out the reaction apo-[ACP] + CoA = holo-[ACP] + adenosine 3',5'-bisphosphate + H(+). Transfers the 4'-phosphopantetheine moiety from coenzyme A to a Ser of acyl-carrier-protein. The protein is Holo-[acyl-carrier-protein] synthase of Cupriavidus pinatubonensis (strain JMP 134 / LMG 1197) (Cupriavidus necator (strain JMP 134)).